Here is a 223-residue protein sequence, read N- to C-terminus: MAAGDGDVKLGTLGSGSESSNDGGSESPGDAGAAAEGGGWAAAALALLTGGGEMLLNVALVALVLLGAYRLWVRWGRRGLGAGAGAGEESPATSLPRMKKRDFSLEQLRQYDGSRNPRILLAVNGKVFDVTKGSKFYGPAGPYGIFAGRDASRGLATFCLDKDALRDEYDDLSDLNAVQMESVREWEMQFKEKYDYVGRLLKPGEEPSEYTDEEDTKDHNKQD.

The disordered stretch occupies residues 1-33; the sequence is MAAGDGDVKLGTLGSGSESSNDGGSESPGDAGA. Ser15 carries O-linked (Xyl...) (chondroitin sulfate) serine glycosylation. Over residues 15 to 33 the composition is skewed to low complexity; sequence SGSESSNDGGSESPGDAGA. A helical transmembrane segment spans residues 42–66; sequence AAALALLTGGGEMLLNVALVALVLL. Residues Ser90, Ser104, and Ser208 each carry the phosphoserine modification. In terms of domain architecture, Cytochrome b5 heme-binding spans 102 to 201; sequence DFSLEQLRQY…EKYDYVGRLL (100 aa). The segment at 202-223 is disordered; sequence KPGEEPSEYTDEEDTKDHNKQD. Positions 206–215 are enriched in acidic residues; the sequence is EPSEYTDEED. Tyr210 is modified (phosphotyrosine). Position 211 is a phosphothreonine (Thr211).

It belongs to the cytochrome b5 family. MAPR subfamily. Interacts with PGRMC1. Interacts with AAAS. In terms of tissue distribution, expressed by endometrial glands and stroma (at protein level). Detected in urine (at protein level).

Its subcellular location is the membrane. It is found in the nucleus envelope. The protein localises to the endoplasmic reticulum. The protein resides in the secreted. Its function is as follows. Required for the maintenance of uterine histoarchitecture and normal female reproductive lifespan. May serve as a universal non-classical progesterone receptor in the uterus. Intracellular heme chaperone required for delivery of labile, or signaling heme, to the nucleus. Plays a role in adipocyte function and systemic glucose homeostasis. In brown fat, which has a high demand for heme, delivery of labile heme in the nucleus regulates the activity of heme-responsive transcriptional repressors such as NR1D1 and BACH1. This chain is Membrane-associated progesterone receptor component 2, found in Homo sapiens (Human).